A 1085-amino-acid chain; its full sequence is Solute carrier family 12 member 4 (1085 aa).

The Cytoplasmic segment spans residues 1-119 (MPHFTVVPVD…RRAAEAPSMG (119 aa)). Ser-24, Ser-47, Ser-51, Ser-81, and Ser-88 each carry phosphoserine. A discontinuously helical membrane pass occupies residues 120–141 (TLMGVYLPCLQNIFGVILFLRL). The K(+) site is built by Asn-131 and Ile-132. The Extracellular segment spans residues 142–149 (TWMVGTAG). A helical membrane pass occupies residues 150 to 172 (VLQALLIVLICCCCTLLTAISMS). Residues 173 to 196 (AIATNGVVPAGGSYFMISRSLGPE) are Cytoplasmic-facing. Residues 197–225 (FGGAVGLCFYLGTTFAAAMYILGAIEILL) form a helical membrane-spanning segment. Tyr-216 serves as a coordination point for K(+). The Extracellular portion of the chain corresponds to 226–248 (TYIAPPAAIFYPSGAHDTSNATL). N-linked (GlcNAc...) asparagine glycosylation is present at Asn-245. 2 helical membrane-spanning segments follow: residues 249-271 (NNMR…VGVK) and 272-297 (YVNK…GGIK). Topologically, residues 298–419 (SIFDPPVFPV…LYVVADIATS (122 aa)) are extracellular. A disulfide bridge links Cys-308 with Cys-323. Residues Asn-312, Asn-331, Asn-347, and Asn-361 are each glycosylated (N-linked (GlcNAc...) asparagine). The cysteines at positions 343 and 353 are disulfide-linked. Residues 420 to 440 (FTVLVGIFFPSVTGIMAGSNR) form a helical membrane-spanning segment. Residues Pro-429 and Thr-432 each contribute to the K(+) site. Chloride contacts are provided by Gly-433, Ile-434, and Met-435. At 441-450 (SGDLRDAQKS) the chain is on the cytoplasmic side. The helical transmembrane segment at 451-473 (IPVGTILAIITTSLVYFSSVVLF) threads the bilayer. Residues 474 to 504 (GACIEGVVLRDKYGDGVSRNLVVGTLAWPSP) lie on the Extracellular side of the membrane. A helical transmembrane segment spans residues 505–531 (WVIVIGSFFSTCGAGLQSLTGAPRLLQ). Residues 532–554 (AIAKDNIIPFLRVFGHGKVNGEP) are Cytoplasmic-facing. 2 helical membrane passes run 555–575 (TWAL…ASLD) and 576–598 (MVAP…ACAV). Position 589 (Tyr-589) interacts with chloride. The Cytoplasmic segment spans residues 599–612 (QTLLRTPNWRPRFK). 2 consecutive transmembrane segments (helical) span residues 613–635 (YYHW…VSSW) and 636–651 (YYAL…IYKY). Residues 652–1085 (IEYQGAEKEW…GGREVITIYS (434 aa)) are Cytoplasmic-facing. Residues 665-681 (IRGLSLSAARYALLRLE) form a scissor helix region. ATP is bound by residues Leu-697, Lys-699, Lys-707, Tyr-708, and Val-730. Residue Ser-734 is modified to Phosphoserine. Residues Gly-794, Trp-795, and Tyr-797 each coordinate ATP. A phosphoserine mark is found at Ser-916 and Ser-967. Position 983 is a phosphothreonine (Thr-983). Ser-1050 is modified (phosphoserine).

This sequence belongs to the SLC12A transporter family. K/Cl co-transporter subfamily. As to quaternary structure, homodimer; adopts a domain-swap conformation at the scissor helices connecting the transmembrane domain and C-terminal domain. Heterodimer with other K-Cl cotransporters. In terms of processing, phosphorylated, phosphorylation may regulate transporter activity. As to expression, ubiquitous. Levels are much higher in erythrocytes from patients with Hb SC and Hb SS compared to normal AA erythrocytes. This may contribute to red blood cell dehydration and to the manifestation of sickle cell disease by increasing the intracellular concentration of HbS. Not detected in circulating reticulocytes.

It is found in the cell membrane. The catalysed reaction is K(+)(in) + chloride(in) = K(+)(out) + chloride(out). With respect to regulation, inhibited by WNK3. Functionally, mediates electroneutral potassium-chloride cotransport when activated by cell swelling. May contribute to cell volume homeostasis in single cells. May be involved in the regulation of basolateral Cl(-) exit in NaCl absorbing epithelia. In terms of biological role, no transporter activity. This Homo sapiens (Human) protein is Solute carrier family 12 member 4.